The following is a 345-amino-acid chain: Tropomodulin-4 (345 aa).

Positions 42-63 (NMLLPAGLRQRDQTKKSPTGPL) are disordered.

The protein belongs to the tropomodulin family. As to quaternary structure, binds to the N-terminus of tropomyosin and to actin. As to expression, highly expressed in skeletal muscle.

It is found in the cytoplasm. It localises to the cytoskeleton. Its function is as follows. Blocks the elongation and depolymerization of the actin filaments at the pointed end. The Tmod/TM complex contributes to the formation of the short actin protofilament, which in turn defines the geometry of the membrane skeleton. The sequence is that of Tropomodulin-4 (TMOD4) from Homo sapiens (Human).